Consider the following 73-residue polypeptide: Gastricsin (73 aa).

Positions 1 to 43 (SVIKVPLKKLKSIRQAMKEKGLLEEFLKTHKYDPAQRYRIGDI) are cleaved as a propeptide — activation peptide. In terms of domain architecture, Peptidase A1 spans 57–73 (YFGEISIGTPPQNFLVL).

It belongs to the peptidase A1 family.

It is found in the secreted. It catalyses the reaction More restricted specificity than pepsin A, but shows preferential cleavage at Tyr-|-Xaa bonds. High activity on hemoglobin.. Its function is as follows. Hydrolyzes a variety of proteins. This is Gastricsin (PGC) from Sus scrofa (Pig).